Reading from the N-terminus, the 216-residue chain is MOB kinase activator 3B (216 aa).

Zn(2+) is bound by residues Cys-82, Cys-87, His-164, and His-169.

Modulates LATS1 expression in the Hippo signaling pathway which plays a pivotal role in organ size control and tumor suppression by restricting proliferation and promoting apoptosis. The chain is MOB kinase activator 3B (Mob3b) from Mus musculus (Mouse).